Consider the following 168-residue polypeptide: S-ribosylhomocysteine lyase (168 aa).

3 residues coordinate Fe cation: His-54, His-58, and Cys-128.

It belongs to the LuxS family. Homodimer. Fe cation serves as cofactor.

The enzyme catalyses S-(5-deoxy-D-ribos-5-yl)-L-homocysteine = (S)-4,5-dihydroxypentane-2,3-dione + L-homocysteine. In terms of biological role, involved in the synthesis of autoinducer 2 (AI-2) which is secreted by bacteria and is used to communicate both the cell density and the metabolic potential of the environment. The regulation of gene expression in response to changes in cell density is called quorum sensing. Catalyzes the transformation of S-ribosylhomocysteine (RHC) to homocysteine (HC) and 4,5-dihydroxy-2,3-pentadione (DPD). The chain is S-ribosylhomocysteine lyase from Histophilus somni (strain 2336) (Haemophilus somnus).